Consider the following 152-residue polypeptide: Ubiquitin-conjugating enzyme E2 N (152 aa).

The region spanning 3 to 149 (GLPRRIIKET…ARAWTRLYAM (147 aa)) is the UBC core domain. Lys-82 is modified (N6-acetyllysine). Cys-87 (glycyl thioester intermediate) is an active-site residue. A Glycyl lysine isopeptide (Lys-Gly) (interchain with G-Cter in ISG15) cross-link involves residue Lys-92. Residue Ser-131 is modified to Phosphoserine.

This sequence belongs to the ubiquitin-conjugating enzyme family. In terms of assembly, heterodimer with UBE2V2. Interacts (UBE2V2-UBE2N heterodimer) with the E3 ligase STUB1 (via the U-box domain); the complex has a specific 'Lys-63'-linked polyubiquitination activity. Interacts with RNF8 and RNF168. Interacts with RNF11. Interacts with the E3 ligases, HLTF and SHPRH; the interactions promote the 'Lys-63'-linked polyubiquitination of PCNA upon genotoxic stress and lead to DNA repair. Interacts with ARIH2 (via RING-type 2). Interacts with OTUB1; leading to inhibit E2-conjugating activity. Interacts with GPS2; leading to inhibit E2-conjugating activity. Interacts with RIGI and RNF135; involved in RIGI ubiquitination and activation. Conjugation to ISG15 impairs formation of the thioester bond with ubiquitin but not interaction with UBE2V2.

It carries out the reaction S-ubiquitinyl-[E1 ubiquitin-activating enzyme]-L-cysteine + [E2 ubiquitin-conjugating enzyme]-L-cysteine = [E1 ubiquitin-activating enzyme]-L-cysteine + S-ubiquitinyl-[E2 ubiquitin-conjugating enzyme]-L-cysteine.. It functions in the pathway protein modification; protein ubiquitination. Its activity is regulated as follows. Activity is inhibited by binding to OTUB1, which prevents 'Lys-63'-linked polyubiquitination. Activity is inhibited by GPS2, leading to prevent 'Lys-63'-linked polyubiquitination. In terms of biological role, the UBE2V1-UBE2N and UBE2V2-UBE2N heterodimers catalyze the synthesis of non-canonical 'Lys-63'-linked polyubiquitin chains. This type of polyubiquitination does not lead to protein degradation by the proteasome. Mediates transcriptional activation of target genes. Plays a role in the control of progress through the cell cycle and differentiation. Plays a role in the error-free DNA repair pathway and contributes to the survival of cells after DNA damage. Acts together with the E3 ligases, HLTF and SHPRH, in the 'Lys-63'-linked poly-ubiquitination of PCNA upon genotoxic stress, which is required for DNA repair. Appears to act together with E3 ligase RNF5 in the 'Lys-63'-linked polyubiquitination of JKAMP thereby regulating JKAMP function by decreasing its association with components of the proteasome and ERAD. Promotes TRIM5 capsid-specific restriction activity and the UBE2V1-UBE2N heterodimer acts in concert with TRIM5 to generate 'Lys-63'-linked polyubiquitin chains which activate the MAP3K7/TAK1 complex which in turn results in the induction and expression of NF-kappa-B and MAPK-responsive inflammatory genes. Together with RNF135 and UB2V1, catalyzes the viral RNA-dependent 'Lys-63'-linked polyubiquitination of RIGI to activate the downstream signaling pathway that leads to interferon beta production. UBE2V1-UBE2N together with TRAF3IP2 E3 ubiquitin ligase mediate 'Lys-63'-linked polyubiquitination of TRAF6, a component of IL17A-mediated signaling pathway. This Rattus norvegicus (Rat) protein is Ubiquitin-conjugating enzyme E2 N (Ube2n).